Reading from the N-terminus, the 491-residue chain is Stage IV sporulation protein A (491 aa).

Residues 23–30 (GPVRTGKS) carry the Walker A motif; involved in ATP-binding motif. ATP is bound at residue 23-30 (GPVRTGKS). Residues 334-362 (QLLSLITRLSKVKNEYDKIESALIDAKIK) adopt a coiled-coil conformation.

In terms of assembly, interacts (via Walker A motif) with SipL (via C-terminus LysM domain).

The protein localises to the cytoplasm. It carries out the reaction ATP + H2O = ADP + phosphate + H(+). In terms of biological role, ATPase. Has a role at an early stage in the morphogenesis of the spore coat and is required for proper coat localization to the forespore. The protein is Stage IV sporulation protein A of Clostridioides difficile (strain 630) (Peptoclostridium difficile).